The sequence spans 91 residues: DNA-directed RNA polymerase subunit omega (91 aa).

This sequence belongs to the RNA polymerase subunit omega family. The RNAP catalytic core consists of 2 alpha, 1 beta, 1 beta' and 1 omega subunit. When a sigma factor is associated with the core the holoenzyme is formed, which can initiate transcription.

The enzyme catalyses RNA(n) + a ribonucleoside 5'-triphosphate = RNA(n+1) + diphosphate. Functionally, promotes RNA polymerase assembly. Latches the N- and C-terminal regions of the beta' subunit thereby facilitating its interaction with the beta and alpha subunits. This chain is DNA-directed RNA polymerase subunit omega, found in Pectobacterium atrosepticum (strain SCRI 1043 / ATCC BAA-672) (Erwinia carotovora subsp. atroseptica).